We begin with the raw amino-acid sequence, 513 residues long: Glycerol-3-phosphate dehydrogenase (513 aa).

16 to 44 (DVAVIGGGINGVGIAADAAGRGLSVFLCE) provides a ligand contact to FAD.

The protein belongs to the FAD-dependent glycerol-3-phosphate dehydrogenase family. FAD serves as cofactor.

It is found in the cytoplasm. The catalysed reaction is a quinone + sn-glycerol 3-phosphate = dihydroxyacetone phosphate + a quinol. The polypeptide is Glycerol-3-phosphate dehydrogenase (glpD) (Pseudomonas tolaasii).